Consider the following 782-residue polypeptide: Chaoptin (782 aa).

22 LRR repeats span residues 16–37 (SLLT…PSDA), 43–64 (RLEE…SFHF), 67–88 (SLKK…TFQG), 93–114 (DLTE…TFAD), 117–138 (QLEQ…AFMN), 141–162 (SLKR…TFQN), 165–186 (ELED…IFDQ), 191–212 (GMFH…PSVP), 224–245 (NIKV…FFRP), 249–270 (SLMQ…LFGN), 273–294 (HLQV…TFRN), 297–318 (KLQW…LFRF), 321–342 (NLRI…LFRE), 344–364 (GLER…TSLS), 370–391 (TLSE…GQLA), 395–416 (CLSW…TFKG), 419–442 (RLAS…SFQG), 446–467 (TLLH…STPN), 468–488 (LLSL…VAGN), 491–512 (SLRY…THSL), 514–535 (ELRH…SLLG), and 539–560 (QLEE…AFCK). 3 N-linked (GlcNAc...) asparagine glycosylation sites follow: N196, N234, and N262. N454 and N488 each carry an N-linked (GlcNAc...) asparagine glycan. N-linked (GlcNAc...) asparagine glycosylation occurs at N530. N618, N648, and N667 each carry an N-linked (GlcNAc...) asparagine glycan.

It belongs to the chaoptin family.

The protein localises to the cell membrane. Required for photoreceptor cell morphogenesis. Mediates homophilic cellular adhesion. This chain is Chaoptin (CHP), found in Tribolium castaneum (Red flour beetle).